We begin with the raw amino-acid sequence, 662 residues long: Translation factor GUF1, mitochondrial (662 aa).

The transit peptide at 1-28 (MYIHSSRTVLARYGSRTPLLRPSVLGRY) directs the protein to the mitochondrion. The 183-residue stretch at 62–244 (ENYRNFSIVA…AIVDHIPAPD (183 aa)) folds into the tr-type G domain. GTP-binding positions include 71–78 (AHVDHGKS), 137–141 (DTPGH), and 191–194 (NKID).

The protein belongs to the TRAFAC class translation factor GTPase superfamily. Classic translation factor GTPase family. LepA subfamily.

The protein resides in the mitochondrion inner membrane. It catalyses the reaction GTP + H2O = GDP + phosphate + H(+). Its function is as follows. Promotes mitochondrial protein synthesis. May act as a fidelity factor of the translation reaction, by catalyzing a one-codon backward translocation of tRNAs on improperly translocated ribosomes. Binds to mitochondrial ribosomes in a GTP-dependent manner. The polypeptide is Translation factor GUF1, mitochondrial (Meyerozyma guilliermondii (strain ATCC 6260 / CBS 566 / DSM 6381 / JCM 1539 / NBRC 10279 / NRRL Y-324) (Yeast)).